A 407-amino-acid chain; its full sequence is Guanine nucleotide-binding protein alpha-1 subunit (407 aa).

Residue glycine 2 is the site of N-myristoyl glycine attachment. A lipid anchor (S-palmitoyl cysteine) is attached at cysteine 3. Residues 73 to 407 (NDIKVLLLGA…MSNNLQSLMF (335 aa)) enclose the G-alpha domain. The G1 motif stretch occupies residues 76–89 (KVLLLGAGDSGKTT). Positions 84, 85, 86, 87, 88, 89, 190, 215, 221, 243, 309, 310, 312, and 380 each coordinate GTP. Residue threonine 88 participates in Mg(2+) binding. Residues 213–221 (DILHCRIKT) are G2 motif. Threonine 221 contributes to the Mg(2+) binding site. The segment at 236–245 (YRFFDVGGQR) is G3 motif. The interval 305-312 (ILFLNKLD) is G4 motif. The tract at residues 378–383 (TTATDT) is G5 motif.

The protein belongs to the G-alpha family. G(q) subfamily. In terms of assembly, g proteins are composed of 3 units; alpha, beta and gamma. The alpha chain contains the guanine nucleotide binding site. It depends on Mg(2+) as a cofactor.

Its function is as follows. Implicated in the mating and sporulation pathway. Probably coupled to mating-factor receptors. May act in concert with Ras1. This chain is Guanine nucleotide-binding protein alpha-1 subunit (gpa1), found in Schizosaccharomyces pombe (strain 972 / ATCC 24843) (Fission yeast).